Here is a 366-residue protein sequence, read N- to C-terminus: Anhydro-N-acetylmuramic acid kinase (366 aa).

12-19 is a binding site for ATP; that stretch reads GTSMDGAD.

This sequence belongs to the anhydro-N-acetylmuramic acid kinase family.

It catalyses the reaction 1,6-anhydro-N-acetyl-beta-muramate + ATP + H2O = N-acetyl-D-muramate 6-phosphate + ADP + H(+). Its pathway is amino-sugar metabolism; 1,6-anhydro-N-acetylmuramate degradation. The protein operates within cell wall biogenesis; peptidoglycan recycling. In terms of biological role, catalyzes the specific phosphorylation of 1,6-anhydro-N-acetylmuramic acid (anhMurNAc) with the simultaneous cleavage of the 1,6-anhydro ring, generating MurNAc-6-P. Is required for the utilization of anhMurNAc either imported from the medium or derived from its own cell wall murein, and thus plays a role in cell wall recycling. The protein is Anhydro-N-acetylmuramic acid kinase of Neisseria meningitidis serogroup C (strain 053442).